Consider the following 387-residue polypeptide: Patatin-13 (387 aa).

Residues 1–23 (MATTKSVLVLIFMILATTSSTFA) form the signal peptide. A PNPLA domain is found at 32–230 (LSVDGGGIKG…TVADPALLSV (199 aa)). Residues 36-41 (GGGIKG) carry the GXGXXG motif. Positions 75–79 (GTSTG) match the GXSXG motif. The active-site Nucleophile is S77. N-linked (GlcNAc...) asparagine glycans are attached at residues N115 and N203. The active-site Proton acceptor is the D216. Positions 216–218 (DGA) match the DGA/G motif. Residues 361-385 (ETYEEALKRFAKLLSDRKKLRANKA) adopt a coiled-coil conformation.

This sequence belongs to the patatin family. As to expression, tuber.

The protein resides in the vacuole. Functionally, probable lipolytic acyl hydrolase (LAH), an activity which is thought to be involved in the response of tubers to pathogens. In Solanum tuberosum (Potato), this protein is Patatin-13.